The sequence spans 498 residues: Galactose-1-phosphate uridylyltransferase (498 aa).

Belongs to the galactose-1-phosphate uridylyltransferase type 2 family.

It localises to the cytoplasm. The catalysed reaction is alpha-D-galactose 1-phosphate + UDP-alpha-D-glucose = alpha-D-glucose 1-phosphate + UDP-alpha-D-galactose. It participates in carbohydrate metabolism; galactose metabolism. In Staphylococcus carnosus (strain TM300), this protein is Galactose-1-phosphate uridylyltransferase.